The sequence spans 654 residues: Potassium voltage-gated channel subfamily A member 4 (654 aa).

Residues 1–305 are Cytoplasmic-facing; it reads MEVAMVSAES…LLFEYPESSS (305 aa). Residues 24-145 are disordered; sequence QARARERERL…EEGRFYYSEE (122 aa). Low complexity predominate over residues 36-50; sequence SRAAAAAAVAAATAA. Residues 81 to 99 show a composition bias toward basic residues; sequence GSRRRRRQRTEKKKLHHRQ. Phosphoserine is present on serine 122. A compositionally biased stretch (acidic residues) spans 122–137; sequence SEEEEDEEEEEEEEEE. Residues 306–327 form a helical membrane-spanning segment; the sequence is PARGIAIVSVLVILISIVIFCL. The Extracellular segment spans residues 328–371; the sequence is ETLPEFRDDRDLIMALSAGGHSRLLNDTSAPHLENSGHTIFNDP. Residue asparagine 353 is glycosylated (N-linked (GlcNAc...) asparagine). A helical transmembrane segment spans residues 372–393; that stretch reads FFIVETVCIVWFSFEFVVRCFA. The Cytoplasmic portion of the chain corresponds to 394–404; it reads CPSQALFFKNI. Residues 405–425 traverse the membrane as a helical segment; that stretch reads MNIIDIVSILPYFITLGTDLA. Residues 426-440 are Extracellular-facing; it reads QQQGGGNGQQQQAMS. A helical; Voltage-sensor transmembrane segment spans residues 441–461; it reads FAILRIIRLVRVFRIFKLSRH. The Cytoplasmic segment spans residues 462–476; it reads SKGLQILGHTLRASM. Residues 463 to 476 are S4-S5 linker; it reads KGLQILGHTLRASM. Residues 477 to 498 form a helical membrane-spanning segment; sequence RELGLLIFFLFIGVILFSSAVY. At 499–512 the chain is on the extracellular side; sequence FAEADEPTTHFQSI. Residues 513 to 524 constitute an intramembrane region (helical); the sequence is PDAFWWAVVTMT. The Selectivity filter motif lies at 525-530; it reads TVGYGD. An intramembrane segment occupies 525–532; it reads TVGYGDMK. At 533-539 the chain is on the extracellular side; that stretch reads PITVGGK. A helical transmembrane segment spans residues 540-568; it reads IVGSLCAIAGVLTIALPVPVIVSNFNYFY. Over 569-654 the chain is Cytoplasmic; sequence HRETENEEQT…SNAKAVETDV (86 aa). Serine 600 is subject to Phosphoserine; by PKA. Over residues 630–641 the composition is skewed to basic and acidic residues; sequence CQGKGDESETDK. The disordered stretch occupies residues 630–654; that stretch reads CQGKGDESETDKNNCSNAKAVETDV. The PDZ-binding motif lies at 652-654; the sequence is TDV.

It belongs to the potassium channel family. A (Shaker) (TC 1.A.1.2) subfamily. Kv1.4/KCNA4 sub-subfamily. In terms of assembly, homotetramer and heterotetramer of potassium channel proteins. Interacts with KCNAB1 and KCNAB2. Interacts with DLG1, DLG2 and DLG4 via their PDZ domains. Interacts with SIGMAR1. Detected in a complex with KCNA1. Interacts with KCNA2. Part of a complex containing KCNA1, KCNAB1 and LGI1. Interacts (via cytoplasmic N-terminal domain) with KCNRG. As to expression, expressed in the brain, lens and retina.

The protein resides in the cell membrane. It localises to the cell projection. The protein localises to the axon. It carries out the reaction K(+)(in) = K(+)(out). Functionally, voltage-gated potassium channel that mediates transmembrane potassium transport in excitable membranes. Forms tetrameric potassium-selective channels through which potassium ions pass in accordance with their electrochemical gradient. The channel alternates between opened and closed conformations in response to the voltage difference across the membrane. Can form functional homotetrameric channels and heterotetrameric channels that contain variable proportions of KCNA1, KCNA2, KCNA4, KCNA5, and possibly other family members as well; channel properties depend on the type of alpha subunits that are part of the channel. Channel properties are modulated by cytoplasmic beta subunits that regulate the subcellular location of the alpha subunits and promote rapid inactivation. In vivo, membranes probably contain a mixture of heteromeric potassium channel complexes, making it difficult to assign currents observed in intact tissues to any particular potassium channel family member. Homotetrameric KCNA4 forms a potassium channel that opens in response to membrane depolarization, followed by rapid spontaneous channel closure. Likewise, a heterotetrameric channel formed by KCNA1 and KCNA4 shows rapid inactivation. The protein is Potassium voltage-gated channel subfamily A member 4 (Kcna4) of Mus musculus (Mouse).